The sequence spans 404 residues: tRNA pseudouridine synthase D (404 aa).

D79 (nucleophile) is an active-site residue. Positions 154-364 (GVPNRFGEQR…MEGERRPLRV (211 aa)) constitute a TRUD domain.

The protein belongs to the pseudouridine synthase TruD family.

It catalyses the reaction uridine(13) in tRNA = pseudouridine(13) in tRNA. Its function is as follows. Responsible for synthesis of pseudouridine from uracil-13 in transfer RNAs. The protein is tRNA pseudouridine synthase D of Geobacter metallireducens (strain ATCC 53774 / DSM 7210 / GS-15).